The sequence spans 359 residues: Palmitoyltransferase ERF2 (359 aa).

Residues 1 to 21 (MALVSRRSTRSESTSITKEEH) form a disordered region. Residues 1-75 (MALVSRRSTR…RFRTVKGAKP (75 aa)) are Cytoplasmic-facing. A helical transmembrane segment spans residues 76–96 (LWLGVLLAIVCPMVLFSIFEA). Residues 97–104 (HKLWHTQN) are Lumenal-facing. A helical membrane pass occupies residues 105 to 125 (GYKVLVIFFYYFWVITLASFI). Topologically, residues 126–217 (RTATSDPGVL…NCIGKRNYRF (92 aa)) are cytoplasmic. One can recognise a DHHC domain in the interval 173–223 (KYCPSCRIWRPPRSSHCSTCNVCVMVHDHHCIWVNNCIGKRNYRFFLIFLL). Catalysis depends on C203, which acts as the S-palmitoyl cysteine intermediate. Residues 218–238 (FLIFLLGAILSSVILLTNCAI) traverse the membrane as a helical segment. Topologically, residues 239-250 (HIARESGGPRDC) are lumenal. The helical transmembrane segment at 251–271 (PVAILLLCYAGLTLWYPAILF) threads the bilayer. At 272–359 (TYHIFMAGNQ…AHSFEKIQKI (88 aa)) the chain is on the cytoplasmic side.

The protein belongs to the DHHC palmitoyltransferase family. ERF2/ZDHHC9 subfamily. In terms of assembly, interacts with SHR5. In terms of processing, autopalmitoylated.

The protein localises to the endoplasmic reticulum membrane. The catalysed reaction is L-cysteinyl-[protein] + hexadecanoyl-CoA = S-hexadecanoyl-L-cysteinyl-[protein] + CoA. Functionally, the ERF2-SHR5 complex is a palmitoyltransferase specific for Ras proteins. Palmitoylates RAS2, which is required for its proper plasma membrane localization. In Saccharomyces cerevisiae (strain ATCC 204508 / S288c) (Baker's yeast), this protein is Palmitoyltransferase ERF2 (ERF2).